Consider the following 149-residue polypeptide: Nucleoside diphosphate kinase 1 (149 aa).

The residue at position 1 (methionine 1) is an N-acetylmethionine. Lysine 9, phenylalanine 57, arginine 85, threonine 91, arginine 102, and asparagine 112 together coordinate ATP. Residue histidine 115 is the Pros-phosphohistidine intermediate of the active site.

The protein belongs to the NDK family. Interacts with CAT1, CAT2 and CAT3. Mg(2+) serves as cofactor.

It is found in the peroxisome. The protein localises to the nucleus. Its subcellular location is the cytoplasm. The enzyme catalyses a 2'-deoxyribonucleoside 5'-diphosphate + ATP = a 2'-deoxyribonucleoside 5'-triphosphate + ADP. It catalyses the reaction a ribonucleoside 5'-diphosphate + ATP = a ribonucleoside 5'-triphosphate + ADP. Its function is as follows. Major role in the synthesis of nucleoside triphosphates other than ATP. The ATP gamma phosphate is transferred to the NDP beta phosphate via a ping-pong mechanism, using a phosphorylated active-site intermediate. Plays a role in response to reactive oxygen species (ROS) stress. The polypeptide is Nucleoside diphosphate kinase 1 (NDK1) (Arabidopsis thaliana (Mouse-ear cress)).